The following is a 62-amino-acid chain: Large ribosomal subunit protein bL33c (62 aa).

Belongs to the bacterial ribosomal protein bL33 family.

Its subcellular location is the plastid. It localises to the chloroplast. This Cyanidioschyzon merolae (strain NIES-3377 / 10D) (Unicellular red alga) protein is Large ribosomal subunit protein bL33c.